We begin with the raw amino-acid sequence, 900 residues long: DNA polymerase nu (900 aa).

A compositionally biased stretch (basic and acidic residues) spans 60–75; it reads LEDRKTQSPEKKDLKS. 2 disordered regions span residues 60–90 and 863–900; these read LEDR…LSPQ and GPPP…SFCL. Over residues 76–90 the composition is skewed to polar residues; it reads LRSQTSRGSAKLSPQ.

The protein belongs to the DNA polymerase type-A family. As to quaternary structure, interacts with FANCD2, FANCI, PCNA, RAD51 and HELQ. Highly expressed in testis and heart. Weakly expressed in skeletal muscle.

The protein resides in the nucleus. The enzyme catalyses DNA(n) + a 2'-deoxyribonucleoside 5'-triphosphate = DNA(n+1) + diphosphate. With respect to regulation, inhibited by ddTTP. In terms of biological role, DNA polymerase with very low fidelity that catalyzes considerable misincorporation by inserting dTTP opposite a G template, and dGTP opposite a T template. Is the least accurate of the DNA polymerase A family (i.e. POLG, POLN and POLQ). Can perform accurate translesion DNA synthesis (TLS) past a 5S-thymine glycol. Can perform efficient strand displacement past a nick or a gap and gives rise to an amount of product similar to that on non-damaged template. Has no exonuclease activity. Error-prone DNA polymerase that preferentially misincorporates dT regardless of template sequence. May play a role in TLS during interstrand cross-link (ICL) repair. May be involved in TLS when genomic replication is blocked by extremely large major groove DNA lesions. May function in the bypass of some DNA-protein and DNA-DNA cross-links. May have a role in cellular tolerance to DNA cross-linking agents. Involved in the repair of DNA cross-links and double-strand break (DSB) resistance. Participates in FANCD2-mediated repair. Forms a complex with HELQ helicase that participates in homologous recombination (HR) repair and is essential for cellular protection against DNA cross-links. In Homo sapiens (Human), this protein is DNA polymerase nu (POLN).